The following is a 103-amino-acid chain: Co-chaperonin GroES (103 aa).

This sequence belongs to the GroES chaperonin family. Heptamer of 7 subunits arranged in a ring. Interacts with the chaperonin GroEL.

Its subcellular location is the cytoplasm. Together with the chaperonin GroEL, plays an essential role in assisting protein folding. The GroEL-GroES system forms a nano-cage that allows encapsulation of the non-native substrate proteins and provides a physical environment optimized to promote and accelerate protein folding. GroES binds to the apical surface of the GroEL ring, thereby capping the opening of the GroEL channel. The protein is Co-chaperonin GroES of Trichodesmium erythraeum (strain IMS101).